The following is a 472-amino-acid chain: Uronate isomerase (472 aa).

Belongs to the metallo-dependent hydrolases superfamily. Uronate isomerase family.

It carries out the reaction D-glucuronate = D-fructuronate. It catalyses the reaction aldehydo-D-galacturonate = keto-D-tagaturonate. It functions in the pathway carbohydrate metabolism; pentose and glucuronate interconversion. The protein is Uronate isomerase of Opitutus terrae (strain DSM 11246 / JCM 15787 / PB90-1).